Reading from the N-terminus, the 311-residue chain is Aspartate carbamoyltransferase catalytic subunit (311 aa).

Residues R55 and T56 each coordinate carbamoyl phosphate. Residue K85 coordinates L-aspartate. R106, H135, and Q138 together coordinate carbamoyl phosphate. 2 residues coordinate L-aspartate: R168 and R230. Residues L268 and P269 each coordinate carbamoyl phosphate.

The protein belongs to the aspartate/ornithine carbamoyltransferase superfamily. ATCase family. As to quaternary structure, heterododecamer (2C3:3R2) of six catalytic PyrB chains organized as two trimers (C3), and six regulatory PyrI chains organized as three dimers (R2).

The enzyme catalyses carbamoyl phosphate + L-aspartate = N-carbamoyl-L-aspartate + phosphate + H(+). The protein operates within pyrimidine metabolism; UMP biosynthesis via de novo pathway; (S)-dihydroorotate from bicarbonate: step 2/3. In terms of biological role, catalyzes the condensation of carbamoyl phosphate and aspartate to form carbamoyl aspartate and inorganic phosphate, the committed step in the de novo pyrimidine nucleotide biosynthesis pathway. This is Aspartate carbamoyltransferase catalytic subunit from Yersinia pseudotuberculosis serotype IB (strain PB1/+).